The chain runs to 294 residues: UPF0761 membrane protein YPTS_0028 (294 aa).

7 helical membrane-spanning segments follow: residues 44 to 64 (LLSL…FPMF), 67 to 87 (ISIK…GDII), 108 to 128 (GLIV…NIIW), 136 to 156 (LVFS…LVGA), 185 to 205 (VFPL…VPTV), 212 to 232 (ALIG…GFAM), and 246 to 266 (VLAV…IVLL).

Belongs to the UPF0761 family.

Its subcellular location is the cell inner membrane. This Yersinia pseudotuberculosis serotype IB (strain PB1/+) protein is UPF0761 membrane protein YPTS_0028.